A 156-amino-acid polypeptide reads, in one-letter code: Ribosomal RNA large subunit methyltransferase H (156 aa).

S-adenosyl-L-methionine contacts are provided by residues leucine 73, glycine 104, and leucine 123–leucine 128.

Belongs to the RNA methyltransferase RlmH family. Homodimer.

The protein resides in the cytoplasm. The enzyme catalyses pseudouridine(1915) in 23S rRNA + S-adenosyl-L-methionine = N(3)-methylpseudouridine(1915) in 23S rRNA + S-adenosyl-L-homocysteine + H(+). In terms of biological role, specifically methylates the pseudouridine at position 1915 (m3Psi1915) in 23S rRNA. This is Ribosomal RNA large subunit methyltransferase H from Marinobacter nauticus (strain ATCC 700491 / DSM 11845 / VT8) (Marinobacter aquaeolei).